The sequence spans 79 residues: Small ribosomal subunit protein bS18 (79 aa).

This sequence belongs to the bacterial ribosomal protein bS18 family. As to quaternary structure, part of the 30S ribosomal subunit. Forms a tight heterodimer with protein bS6.

Binds as a heterodimer with protein bS6 to the central domain of the 16S rRNA, where it helps stabilize the platform of the 30S subunit. This is Small ribosomal subunit protein bS18 from Blochmanniella pennsylvanica (strain BPEN).